Consider the following 257-residue polypeptide: UPF0246 protein VCM66_2278 (257 aa).

Belongs to the UPF0246 family.

The chain is UPF0246 protein VCM66_2278 from Vibrio cholerae serotype O1 (strain M66-2).